Here is a 53-residue protein sequence, read N- to C-terminus: Large ribosomal subunit protein bL33 (53 aa).

The protein belongs to the bacterial ribosomal protein bL33 family.

This Ureaplasma parvum serovar 3 (strain ATCC 27815 / 27 / NCTC 11736) protein is Large ribosomal subunit protein bL33.